Reading from the N-terminus, the 468-residue chain is Zinc transporter SLC39A7 (468 aa).

A helical membrane pass occupies residues 10–30; sequence WVAVGLLTWAALGLLVAGHEG. Basic and acidic residues-rich tracts occupy residues 36 to 56 and 64 to 100; these read RDVE…DFHH and HTHE…DSLH. The interval 36 to 116 is disordered; the sequence is RDVEEDFHGH…SHGASREAGA (81 aa). Histidine 64 is modified (pros-methylhistidine). The next 3 membrane-spanning stretches (helical) occupy residues 132–152, 163–183, and 208–228; these read ALGA…LIPV, LQIL…LHLI, and GPIL…LVVE. Positions 237–248 are enriched in basic residues; the sequence is GHGHAHAHGHGH. A disordered region spans residues 237–313; the sequence is GHGHAHAHGH…NPEEEKTGSD (77 aa). The span at 249-312 shows a compositional bias: basic and acidic residues; sequence SHGDSHAHGH…QNPEEEKTGS (64 aa). 3 helical membrane passes run 385 to 405, 409 to 429, and 447 to 467; these read LTAI…GGAV, VAGG…FIYV, and SLLE…IAHL.

Belongs to the ZIP transporter (TC 2.A.5) family. KE4/Catsup subfamily. As to quaternary structure, homodimer. In terms of processing, rapidly phosphorylated by CK2 following Zn(2+) treatment. This phosphorylation is required for efficient cytosolic Zn(2+) release.

It is found in the endoplasmic reticulum membrane. Its subcellular location is the golgi apparatus. The protein localises to the cis-Golgi network membrane. It catalyses the reaction Zn(2+)(in) = Zn(2+)(out). Its function is as follows. Transports Zn(2+) from the endoplasmic reticulum (ER)/Golgi apparatus to the cytosol, playing an essential role in the regulation of cytosolic zinc levels. Acts as a gatekeeper of zinc release from intracellular stores, requiring post-translational activation by phosphorylation on residues, resulting in activation of multiple downstream pathways leading to cell growth and proliferation. Has an essential role in B cell development and is required for proper B cell receptor signaling. Plays an important role in maintaining intestinal epithelial homeostasis and skin dermis development by regulating ER function. Controls cell signaling pathways involved in glucose metabolism in skeletal muscle. Has a protective role against ER stress in different biological contexts. Mediates Zn(2+)-induced ferroptosis. The polypeptide is Zinc transporter SLC39A7 (Rattus norvegicus (Rat)).